Reading from the N-terminus, the 489-residue chain is Ketol-acid reductoisomerase (NADP(+)) (489 aa).

The KARI N-terminal Rossmann domain occupies 16 to 207 (IKKCRFMEKK…GGHRAGVLES (192 aa)). NADP(+)-binding positions include 44–47 (CGSQ), arginine 67, serine 77, and 107–109 (DKQ). The active site involves histidine 131. Glycine 157 provides a ligand contact to NADP(+). 2 KARI C-terminal knotted domains span residues 208 to 343 (SFVA…QSPD) and 344 to 483 (YDKK…MKNM). Mg(2+)-binding residues include aspartate 216, glutamate 220, glutamate 388, and glutamate 392. Residue serine 413 participates in substrate binding.

Belongs to the ketol-acid reductoisomerase family. The cofactor is Mg(2+).

The enzyme catalyses (2R)-2,3-dihydroxy-3-methylbutanoate + NADP(+) = (2S)-2-acetolactate + NADPH + H(+). It carries out the reaction (2R,3R)-2,3-dihydroxy-3-methylpentanoate + NADP(+) = (S)-2-ethyl-2-hydroxy-3-oxobutanoate + NADPH + H(+). The protein operates within amino-acid biosynthesis; L-isoleucine biosynthesis; L-isoleucine from 2-oxobutanoate: step 2/4. Its pathway is amino-acid biosynthesis; L-valine biosynthesis; L-valine from pyruvate: step 2/4. In terms of biological role, involved in the biosynthesis of branched-chain amino acids (BCAA). Catalyzes an alkyl-migration followed by a ketol-acid reduction of (S)-2-acetolactate (S2AL) to yield (R)-2,3-dihydroxy-isovalerate. In the isomerase reaction, S2AL is rearranged via a Mg-dependent methyl migration to produce 3-hydroxy-3-methyl-2-ketobutyrate (HMKB). In the reductase reaction, this 2-ketoacid undergoes a metal-dependent reduction by NADPH to yield (R)-2,3-dihydroxy-isovalerate. The protein is Ketol-acid reductoisomerase (NADP(+)) of Buchnera aphidicola subsp. Diuraphis noxia.